We begin with the raw amino-acid sequence, 339 residues long: 1-aminocyclopropane-1-carboxylate deaminase (339 aa).

Residue lysine 52 is modified to N6-(pyridoxal phosphate)lysine. Serine 79 (nucleophile) is an active-site residue.

Belongs to the ACC deaminase/D-cysteine desulfhydrase family. As to quaternary structure, homotrimer. Pyridoxal 5'-phosphate serves as cofactor.

The enzyme catalyses 1-aminocyclopropane-1-carboxylate + H2O = 2-oxobutanoate + NH4(+). Functionally, catalyzes a cyclopropane ring-opening reaction, the irreversible conversion of 1-aminocyclopropane-1-carboxylate (ACC) to ammonia and alpha-ketobutyrate. Allows growth on ACC as a nitrogen source. The chain is 1-aminocyclopropane-1-carboxylate deaminase from Bradyrhizobium sp. (strain BTAi1 / ATCC BAA-1182).